We begin with the raw amino-acid sequence, 849 residues long: Putative endoplasmic reticulum mannosidase MNL2 (849 aa).

Over 1–12 the chain is Cytoplasmic; the sequence is MSIARLVYSLFR. A helical; Signal-anchor for type II membrane protein transmembrane segment spans residues 13-32; the sequence is RVRSVLLLFITISLLFYYTF. The Lumenal portion of the chain corresponds to 33 to 849; that stretch reads QNEIDILNSY…TQGGHIIKKK (817 aa). N45 carries N-linked (GlcNAc...) asparagine glycosylation. Positions 56–79 are disordered; sequence HNTEGSSKLDPPDLSSTGSDRIAT. A disulfide bridge links C559 with C598.

It belongs to the glycosyl hydrolase 47 family. Requires Ca(2+) as cofactor.

Its subcellular location is the endoplasmic reticulum membrane. It participates in protein modification; protein glycosylation. In terms of biological role, putative mannosidase involved in glycoprotein quality control since it is involved in the targeting of misfolded glycoproteins for ER-associated protein degradation (ERAD). This chain is Putative endoplasmic reticulum mannosidase MNL2 (MNL2), found in Saccharomyces cerevisiae (strain ATCC 204508 / S288c) (Baker's yeast).